We begin with the raw amino-acid sequence, 70 residues long: Guanine nucleotide-binding protein subunit gamma-1 (70 aa).

C67 bears the Cysteine methyl ester mark. C67 carries the S-geranylgeranyl cysteine lipid modification. A propeptide spans 68–70 (removed in mature form); that stretch reads TVL.

It belongs to the G protein gamma family. In terms of assembly, g proteins are composed of 3 units, alpha, beta and gamma. As to expression, predominantly expressed in the central nervous system.

It is found in the cell membrane. Its function is as follows. Guanine nucleotide-binding proteins (G proteins) are involved as a modulator or transducer in various transmembrane signaling systems. The beta and gamma chains are required for the GTPase activity, for replacement of GDP by GTP, and for G protein-effector interaction. In Drosophila melanogaster (Fruit fly), this protein is Guanine nucleotide-binding protein subunit gamma-1 (Ggamma1).